Here is a 355-residue protein sequence, read N- to C-terminus: Syntaxin-5 (355 aa).

Residues 1 to 333 (MIPRKRYGSK…KYFQSVTSNR (333 aa)) are Cytoplasmic-facing. The IxM motif; signal for cargo packaging into COPII-coated vesicles motif lies at 245-247 (IDM). A t-SNARE coiled-coil homology domain is found at 263-325 (DSYIQSRADT…EAAHSEILKY (63 aa)). Residues 287–318 (FQQLAHMVKEQEETIQRIDENVLGAQLDVEAA) adopt a coiled-coil conformation. A helical; Anchor for type IV membrane protein membrane pass occupies residues 334–354 (WLMVKIFLILIVFFIIFVVFL). Ala-355 is a topological domain (vesicular).

The protein belongs to the syntaxin family. Part of a ternary complex containing STX5A, NSFL1C and VCP. Part of a unique SNARE complex composed of the Golgi SNAREs GOSR1, GOSR2, YKT6 and VTI1A. Component of a SNARE complex consisting of STX5, YKT6, GOSR1 and BET1L. Interacts with BET1L. Interacts with BET1. Interacts with COG4. Interacts with GM130/GOLGA2. Interacts (via IxM motif) with SEC24C and SEC24D; mediates STX5 packaging into COPII-coated vesicles. Interacts with VLDLR; this interaction mediates VLDLR translocation from the endoplasmic reticulum to the plasma membrane.

Its subcellular location is the endoplasmic reticulum-Golgi intermediate compartment membrane. It localises to the golgi apparatus membrane. Its function is as follows. Mediates endoplasmic reticulum to Golgi transport. Together with p115/USO1 and GM130/GOLGA2, involved in vesicle tethering and fusion at the cis-Golgi membrane to maintain the stacked and inter-connected structure of the Golgi apparatus. Required for Golgi to endoplasmic reticulum retrogade transport, and for intra-Golgi transport. The protein is Syntaxin-5 (Stx5) of Mus musculus (Mouse).